The following is a 173-amino-acid chain: Crossover junction endodeoxyribonuclease RuvC (173 aa).

Active-site residues include aspartate 8, glutamate 67, and aspartate 139. The Mg(2+) site is built by aspartate 8, glutamate 67, and aspartate 139.

This sequence belongs to the RuvC family. As to quaternary structure, homodimer which binds Holliday junction (HJ) DNA. The HJ becomes 2-fold symmetrical on binding to RuvC with unstacked arms; it has a different conformation from HJ DNA in complex with RuvA. In the full resolvosome a probable DNA-RuvA(4)-RuvB(12)-RuvC(2) complex forms which resolves the HJ. It depends on Mg(2+) as a cofactor.

The protein resides in the cytoplasm. The enzyme catalyses Endonucleolytic cleavage at a junction such as a reciprocal single-stranded crossover between two homologous DNA duplexes (Holliday junction).. Functionally, the RuvA-RuvB-RuvC complex processes Holliday junction (HJ) DNA during genetic recombination and DNA repair. Endonuclease that resolves HJ intermediates. Cleaves cruciform DNA by making single-stranded nicks across the HJ at symmetrical positions within the homologous arms, yielding a 5'-phosphate and a 3'-hydroxyl group; requires a central core of homology in the junction. The consensus cleavage sequence is 5'-(A/T)TT(C/G)-3'. Cleavage occurs on the 3'-side of the TT dinucleotide at the point of strand exchange. HJ branch migration catalyzed by RuvA-RuvB allows RuvC to scan DNA until it finds its consensus sequence, where it cleaves and resolves the cruciform DNA. This is Crossover junction endodeoxyribonuclease RuvC from Enterobacter sp. (strain 638).